The chain runs to 89 residues: UPF0213 protein LMOf2365_0181 (89 aa).

A GIY-YIG domain is found at 5–80; that stretch reads SEHFFYVLKC…KKLSRKNKDA (76 aa).

This sequence belongs to the UPF0213 family.

In Listeria monocytogenes serotype 4b (strain F2365), this protein is UPF0213 protein LMOf2365_0181.